A 376-amino-acid chain; its full sequence is MRMLFRSFLATEAAGGIILIAAAAAAMLVANSPLAPTYFELLHARLGPLSLLHWINDALMALFFLLVGLEIKREFLRGHLARWSDRILPCIAAAAGMAAPALLYLAFAGGTEGLVRGWAIPTATDIAFAIGVLALLGSRAPASLKLFLTTIAIVDDMGAVAIIALAYTAAISGPALLAAIVILAAMAGLGRIGVRRLWPYLLLAAALWLAVLLSGVHATIAGVLAALAIPLGDEDDSPLERLEHGLHPWVAFAIVPLFGFANAGVSFAEIGAEQLLAPLPLGIAAGLFLGKQAGIFGSVRLAVALGLAQRPAGASWTQLYGVALLCGIGFTMSLFIGGLAFSDPLLIDEVKIGVLGGSILSAIAGYALLRWTGKVT.

Transmembrane regions (helical) follow at residues 8–28 (FLATEAAGGIILIAAAAAAML), 49–69 (LSLLHWINDALMALFFLLVGL), 87–107 (ILPCIAAAAGMAAPALLYLAF), 117–137 (GWAIPTATDIAFAIGVLALLG), 140–160 (APASLKLFLTTIAIVDDMGAV), 162–182 (IIALAYTAAISGPALLAAIVI), 209–229 (LAVLLSGVHATIAGVLAALAI), 248–268 (PWVAFAIVPLFGFANAGVSFA), 270–290 (IGAEQLLAPLPLGIAAGLFLG), 321–341 (GVALLCGIGFTMSLFIGGLAF), and 349–369 (EVKIGVLGGSILSAIAGYALL).

The protein belongs to the NhaA Na(+)/H(+) (TC 2.A.33) antiporter family.

The protein localises to the cell inner membrane. It carries out the reaction Na(+)(in) + 2 H(+)(out) = Na(+)(out) + 2 H(+)(in). Its function is as follows. Na(+)/H(+) antiporter that extrudes sodium in exchange for external protons. The chain is Na(+)/H(+) antiporter NhaA from Rhizorhabdus wittichii (strain DSM 6014 / CCUG 31198 / JCM 15750 / NBRC 105917 / EY 4224 / RW1) (Sphingomonas wittichii).